A 158-amino-acid polypeptide reads, in one-letter code: MSKKSKKPENQICANKKARHEYFIEETFEAGLSLQGWEVKAIRAGKMTITEAYIIFRNNEAFLFGAHIQPLLSSSTHVSPDSIRTRKLLLNRREIEKLMGAVNQKGYACVPLSCYWKNSLVKCQIGLALGKKQHDKRKTLKDRDWERDKQRGFKKDLD.

The tract at residues 135 to 158 is disordered; it reads DKRKTLKDRDWERDKQRGFKKDLD. A compositionally biased stretch (basic and acidic residues) spans 141 to 158; that stretch reads KDRDWERDKQRGFKKDLD.

It belongs to the SmpB family.

It localises to the cytoplasm. In terms of biological role, required for rescue of stalled ribosomes mediated by trans-translation. Binds to transfer-messenger RNA (tmRNA), required for stable association of tmRNA with ribosomes. tmRNA and SmpB together mimic tRNA shape, replacing the anticodon stem-loop with SmpB. tmRNA is encoded by the ssrA gene; the 2 termini fold to resemble tRNA(Ala) and it encodes a 'tag peptide', a short internal open reading frame. During trans-translation Ala-aminoacylated tmRNA acts like a tRNA, entering the A-site of stalled ribosomes, displacing the stalled mRNA. The ribosome then switches to translate the ORF on the tmRNA; the nascent peptide is terminated with the 'tag peptide' encoded by the tmRNA and targeted for degradation. The ribosome is freed to recommence translation, which seems to be the essential function of trans-translation. The sequence is that of SsrA-binding protein from Psychrobacter cryohalolentis (strain ATCC BAA-1226 / DSM 17306 / VKM B-2378 / K5).